An 873-amino-acid chain; its full sequence is MASLKMLICVCVAILIPSTLSQDSHGIAGIIDPRDTASMDVGKISFSEAIGSGAPKEPQIRNRIFACSSPTGASVARLAQPRHCHRHADSTNMTEGIAVVFKQNIAPYVFNVTLYYKHITTVTTWALFSRPQITNEYVTRVPIDYHEIVRIDRSGECSSKATYHKNFMFFEAYDNDEAEKKLPLVPSLLRSTVSKAFHTTNFTKRHQTLGYRTSTSVDCVVEYLQARSVYPYDYFGMATGDTVEISPFYTKNTTGPRRHSVYRDYRFLEIANYQVRDLETGQIRPPKKRNFLTDEQFTIGWDAMEEKESVCTLSKWIEVPEAVRVSYKNSYHFSLKDMTMTFSSGKQPFNISRLHLAECVPTIATEAIDGIFARKYSSTHVRSGDIEYYLGSGGFLIAFQKLMSHGLAEMYLEEAQRQNHLPRGRERRQAAGRRTASLQSGPQGDRITTHSSATFAMLQFAYDKIQAHVNELIGNLLEAWCELQNRQLIVWHEMKKLNPNSLMTSLFGQPVSARLLGDIVAVSKCIEIPIENIRMQDSMRMPGDPTMCYTRPVLIFRYSSSPESQFSANSTENHNLDILGQLGEHNEILQGRNLIEPCMINHRRYFLLGENYLLYEDYTFVRQVNASEIEEVSIFINLNATILEDLDFVPVEVYTREELRDTGTLNYDDVVRYQNIYNKRFRDIDTVIRGDRGDAIFRAIADFFGNTLGEVGKALGTVVMTAAAAVISTVSGIASFLSNPFAALGIGIAVVVSIILGLLAFKYVMNLKSNPVQVLFPGAVPPAGTPPRPSRRYYKDEEEVEEDSDEDDRILATRVLKGLELLHKDEQKARRQKARFSAFAKNMRNLFRRKPRTKEDDYPLLEYPSWAEESEDE.

The first 21 residues, 1-21 (MASLKMLICVCVAILIPSTLS), serve as a signal peptide directing secretion. Residues 22 to 740 (QDSHGIAGII…SGIASFLSNP (719 aa)) lie on the Virion surface side of the membrane. 5 disulfides stabilise this stretch: Cys67-Cys525, Cys84-Cys481, Cys157-Cys219, Cys311-Cys359, and Cys548-Cys598. 2 N-linked (GlcNAc...) asparagine; by host glycosylation sites follow: Asn92 and Asn111. The interval 124–130 (TWALFSR) is involved in fusion and/or binding to host membrane. Asn201 is a glycosylation site (N-linked (GlcNAc...) asparagine; by host). The involved in fusion and/or binding to host membrane stretch occupies residues 206–213 (HQTLGYRT). Asn252 and Asn350 each carry an N-linked (GlcNAc...) asparagine; by host glycan. The interval 418–447 (QNHLPRGRERRQAAGRRTASLQSGPQGDRI) is disordered. Residues Asn569, Asn625, and Asn639 are each glycosylated (N-linked (GlcNAc...) asparagine; by host). Hydrophobic membrane proximal region stretches follow at residues 684-738 (IDTV…SFLS) and 715-734 (LGTVVMTAAAAVISTVSGIA). The helical transmembrane segment at 741–761 (FAALGIGIAVVVSIILGLLAF) threads the bilayer. At 762-873 (KYVMNLKSNP…PSWAEESEDE (112 aa)) the chain is on the intravirion side. The segment at 781–807 (PPAGTPPRPSRRYYKDEEEVEEDSDED) is disordered. The span at 796 to 807 (DEEEVEEDSDED) shows a compositional bias: acidic residues. The Internalization motif signature appears at 858-861 (YPLL).

Belongs to the herpesviridae glycoprotein B family. As to quaternary structure, homotrimer; disulfide-linked. Binds to heparan sulfate proteoglycans. Interacts with gH/gL heterodimer. In terms of processing, a proteolytic cleavage by host furin generates two subunits that remain linked by disulfide bonds.

Its subcellular location is the virion membrane. It is found in the host cell membrane. It localises to the host endosome membrane. The protein resides in the host Golgi apparatus membrane. Its function is as follows. Envelope glycoprotein that forms spikes at the surface of virion envelope. Essential for the initial attachment to heparan sulfate moieties of the host cell surface proteoglycans. Involved in fusion of viral and cellular membranes leading to virus entry into the host cell. Following initial binding to its host receptors, membrane fusion is mediated by the fusion machinery composed at least of gB and the heterodimer gH/gL. May be involved in the fusion between the virion envelope and the outer nuclear membrane during virion egress. This Infectious laryngotracheitis virus (strain 632) (ILTV) protein is Envelope glycoprotein B.